Here is a 79-residue protein sequence, read N- to C-terminus: Small ribosomal subunit protein bS21 (79 aa).

The segment at 58 to 79 (ARKKMQREGLLPMKPKPMPGMR) is disordered.

Belongs to the bacterial ribosomal protein bS21 family.

The polypeptide is Small ribosomal subunit protein bS21 (Beijerinckia indica subsp. indica (strain ATCC 9039 / DSM 1715 / NCIMB 8712)).